The chain runs to 419 residues: Creatine kinase S-type, mitochondrial (419 aa).

The transit peptide at Met-1–Ala-39 directs the protein to the mitochondrion. The tract at residues Ala-40–Met-64 is cardiolipin-binding. The region spanning Lys-46–Asn-132 is the Phosphagen kinase N-terminal domain. The region spanning Tyr-159–Leu-401 is the Phosphagen kinase C-terminal domain. Residues Ser-162–Arg-166 and His-225 contribute to the ATP site. Tyr-255 carries the post-translational modification Phosphotyrosine. ATP-binding positions include Arg-270, Arg-326, Arg-354–Val-359, and Asp-369. At Thr-356 the chain carries Phosphothreonine.

It belongs to the ATP:guanido phosphotransferase family. As to quaternary structure, exists as an octamer composed of four CKMT2 homodimers.

It is found in the mitochondrion inner membrane. It carries out the reaction creatine + ATP = N-phosphocreatine + ADP + H(+). Functionally, reversibly catalyzes the transfer of phosphate between ATP and various phosphogens (e.g. creatine phosphate). Creatine kinase isoenzymes play a central role in energy transduction in tissues with large, fluctuating energy demands, such as skeletal muscle, heart, brain and spermatozoa. This is Creatine kinase S-type, mitochondrial (CKMT2) from Bos taurus (Bovine).